The sequence spans 462 residues: Glycine--tRNA ligase (462 aa).

Residues Arg-94 and Glu-143 each contribute to the substrate site. Residues 175 to 177 (RNE), 185 to 190 (FRTCEF), 259 to 260 (EL), and 308 to 311 (GLTR) each bind ATP. 190–194 (FEQME) is a substrate binding site. 304-308 (ETSAG) contacts substrate.

Belongs to the class-II aminoacyl-tRNA synthetase family. Homodimer.

It is found in the cytoplasm. The catalysed reaction is tRNA(Gly) + glycine + ATP = glycyl-tRNA(Gly) + AMP + diphosphate. Its function is as follows. Catalyzes the attachment of glycine to tRNA(Gly). In Treponema pallidum (strain Nichols), this protein is Glycine--tRNA ligase.